The chain runs to 171 residues: 3-hydroxydecanoyl-[acyl-carrier-protein] dehydratase (171 aa).

Residue H70 is part of the active site.

The protein belongs to the thioester dehydratase family. FabA subfamily. Homodimer.

The protein resides in the cytoplasm. It catalyses the reaction a (3R)-hydroxyacyl-[ACP] = a (2E)-enoyl-[ACP] + H2O. It carries out the reaction (3R)-hydroxydecanoyl-[ACP] = (2E)-decenoyl-[ACP] + H2O. The catalysed reaction is (2E)-decenoyl-[ACP] = (3Z)-decenoyl-[ACP]. It participates in lipid metabolism; fatty acid biosynthesis. In terms of biological role, necessary for the introduction of cis unsaturation into fatty acids. Catalyzes the dehydration of (3R)-3-hydroxydecanoyl-ACP to E-(2)-decenoyl-ACP and then its isomerization to Z-(3)-decenoyl-ACP. Can catalyze the dehydratase reaction for beta-hydroxyacyl-ACPs with saturated chain lengths up to 16:0, being most active on intermediate chain length. This is 3-hydroxydecanoyl-[acyl-carrier-protein] dehydratase from Pseudomonas syringae pv. syringae (strain B728a).